The chain runs to 224 residues: Urease accessory protein UreF (224 aa).

It belongs to the UreF family. UreD, UreF and UreG form a complex that acts as a GTP-hydrolysis-dependent molecular chaperone, activating the urease apoprotein by helping to assemble the nickel containing metallocenter of UreC. The UreE protein probably delivers the nickel.

It localises to the cytoplasm. In terms of biological role, required for maturation of urease via the functional incorporation of the urease nickel metallocenter. This Enterobacter sp. (strain 638) protein is Urease accessory protein UreF.